Consider the following 212-residue polypeptide: Ribonuclease HII (212 aa).

One can recognise an RNase H type-2 domain in the interval 18-212; that stretch reads GCVFGVDEAG…APVAQQELFR (195 aa). Residues Asp-24, Glu-25, and Asp-118 each coordinate a divalent metal cation.

Belongs to the RNase HII family. It depends on Mn(2+) as a cofactor. The cofactor is Mg(2+).

The protein localises to the cytoplasm. The catalysed reaction is Endonucleolytic cleavage to 5'-phosphomonoester.. In terms of biological role, endonuclease that specifically degrades the RNA of RNA-DNA hybrids. In Erythrobacter litoralis (strain HTCC2594), this protein is Ribonuclease HII.